A 358-amino-acid polypeptide reads, in one-letter code: Methylthioribose-1-phosphate isomerase (358 aa).

Substrate is bound by residues 54-56 (RGA), Arg-96, and Gln-205. The active-site Proton donor is the Asp-246. 256-257 (NK) is a substrate binding site.

This sequence belongs to the eIF-2B alpha/beta/delta subunits family. MtnA subfamily.

It carries out the reaction 5-(methylsulfanyl)-alpha-D-ribose 1-phosphate = 5-(methylsulfanyl)-D-ribulose 1-phosphate. Its pathway is amino-acid biosynthesis; L-methionine biosynthesis via salvage pathway; L-methionine from S-methyl-5-thio-alpha-D-ribose 1-phosphate: step 1/6. Functionally, catalyzes the interconversion of methylthioribose-1-phosphate (MTR-1-P) into methylthioribulose-1-phosphate (MTRu-1-P). The polypeptide is Methylthioribose-1-phosphate isomerase (Azotobacter vinelandii (strain DJ / ATCC BAA-1303)).